We begin with the raw amino-acid sequence, 190 residues long: LIM domain-containing protein WLIM1 (190 aa).

A2 is modified (N-acetylalanine). Residues 8–68 (QKCMACDKTV…RPHFDQNFKR (61 aa)) enclose the LIM zinc-binding 1 domain. Residues 74 to 98 (KSFEGTPKIGKPDRPLEGERPAGTK) are disordered. Residues 83–95 (GKPDRPLEGERPA) are compositionally biased toward basic and acidic residues. Residues 108–168 (EKCVGCDKTV…KHHHIQLIKE (61 aa)) enclose the LIM zinc-binding 2 domain.

In terms of assembly, interacts with F-actin. As to expression, expressed in roots, leaves, stems, flowers and siliques. Not detected in pollen.

It is found in the cytoplasm. It localises to the cytoskeleton. Binds to actin filaments and promotes cross-linking into thick bundles. Has an actin-stabilizing activity. The actin regulatory activities are not regulated by pH and [Ca(2+)]. The sequence is that of LIM domain-containing protein WLIM1 from Arabidopsis thaliana (Mouse-ear cress).